A 332-amino-acid chain; its full sequence is dTDP-3,4-didehydro-2,6-dideoxy-alpha-D-glucose 3-reductase (332 aa).

An NADP(+)-binding site is contributed by 12 to 18; it reads CASFAWR. Arginine 19 provides a ligand contact to substrate. NADP(+) is bound by residues 37 to 38, tyrosine 58, leucine 74, and histidine 79; that span reads SR. The active-site Proton donor is lysine 97. NADP(+) contacts are provided by arginine 165 and aspartate 177. Substrate-binding residues include tyrosine 235 and threonine 255.

This sequence belongs to the Gfo/Idh/MocA family. In terms of assembly, monomer.

The catalysed reaction is dTDP-4-dehydro-2,6-dideoxy-alpha-D-glucose + NADP(+) = dTDP-3,4-didehydro-2,6-dideoxy-alpha-D-glucose + NADPH + H(+). In terms of biological role, involved in the biosynthesis of forosamine ((4-dimethylamino)-2,3,4,6-tetradeoxy-alpha-D-threo-hexopyranose), a highly deoxygenated sugar component of several bioactive natural products such as the insecticidal spinosyns A and D. Catalyzes the reduction of the C-3 keto moiety of dTDP-3,4-diketo-2,6-dideoxy-alpha-D-glucose to yield dTDP-4-keto-2,6-dideoxy-alpha-D-glucose. NADPH is the better reductant, however NADH can also be used. The polypeptide is dTDP-3,4-didehydro-2,6-dideoxy-alpha-D-glucose 3-reductase (Saccharopolyspora spinosa).